The sequence spans 243 residues: Transcription factor TFIIS homolog (243 aa).

The TFIIS central domain occupies 77–201 (MRDIIQMMFF…SQQKVAEKTS (125 aa)). A TFIIS-type zinc finger spans residues 202-242 (QLYKCPNCKQRMCTYREVQTRALDEPSTIFCTCKKCGHEFI). Zn(2+) contacts are provided by C206, C209, C234, and C237.

The protein belongs to the TFS-II family.

Its function is as follows. Putative initiation factor. Necessary for efficient transcription elongation past template-encoded arresting sites. The sequence is that of Transcription factor TFIIS homolog from Ornithodoros (relapsing fever ticks).